We begin with the raw amino-acid sequence, 161 residues long: MKYDTSELCDIYQEDVNVVEPLFSNFGGRSSFGGQIITVKCFEDNGLLYELLEQNGRGRILLVDGGGSVRRALIDADLARLALQNEWEGIVVYGAVRQVDDLEELDLGIQAIAAIPVGAAGEGIGESDVRVNFGGVTFFSGDHLYADNTGIILSEDPLDIE.

It belongs to the RraA family. Homotrimer. Binds to both RNA-binding sites in the C-terminal region of Rne and to RhlB.

Its subcellular location is the cytoplasm. In terms of biological role, globally modulates RNA abundance by binding to RNase E (Rne) and regulating its endonucleolytic activity. Can modulate Rne action in a substrate-dependent manner by altering the composition of the degradosome. Modulates RNA-binding and helicase activities of the degradosome. The sequence is that of Regulator of ribonuclease activity A from Enterobacter sp. (strain 638).